We begin with the raw amino-acid sequence, 608 residues long: Alpha-glycerophosphate oxidase (608 aa).

Position 21–49 (21–49 (DLLIIGGGITGAGVALQAAASGLETGLIE)) interacts with FAD. The interval 393–418 (SAVSKLESSTSEKHLDPSAVSRGSSL) is disordered.

This sequence belongs to the FAD-dependent glycerol-3-phosphate dehydrogenase family. FAD is required as a cofactor.

It localises to the cell membrane. It catalyses the reaction sn-glycerol 3-phosphate + O2 = dihydroxyacetone phosphate + H2O2. The protein operates within membrane lipid metabolism; glycerophospholipid metabolism. This Streptococcus pneumoniae serotype 4 (strain ATCC BAA-334 / TIGR4) protein is Alpha-glycerophosphate oxidase (glpO).